A 350-amino-acid polypeptide reads, in one-letter code: Deoxyhypusine synthase-like protein (350 aa).

Belongs to the deoxyhypusine synthase family.

The polypeptide is Deoxyhypusine synthase-like protein (Chlorobaculum tepidum (strain ATCC 49652 / DSM 12025 / NBRC 103806 / TLS) (Chlorobium tepidum)).